The chain runs to 245 residues: Probable phosphatase Ent638_1550 (245 aa).

9 residues coordinate Zn(2+): histidine 7, histidine 9, histidine 15, histidine 40, glutamate 73, histidine 101, histidine 131, aspartate 192, and histidine 194.

This sequence belongs to the PHP family. As to quaternary structure, homotrimer. It depends on Zn(2+) as a cofactor.

This Enterobacter sp. (strain 638) protein is Probable phosphatase Ent638_1550.